A 639-amino-acid chain; its full sequence is Chaperone protein DnaK (639 aa).

At threonine 198 the chain carries Phosphothreonine; by autocatalysis. Low complexity predominate over residues 603–618 (AKAQTQGGAQEGAAKQ). Residues 603-639 (AKAQTQGGAQEGAAKQSNATADDVVDAEFEEVKDDKK) are disordered. Positions 625–639 (DVVDAEFEEVKDDKK) are enriched in acidic residues.

This sequence belongs to the heat shock protein 70 family.

Acts as a chaperone. The protein is Chaperone protein DnaK of Shewanella sp. (strain ANA-3).